The following is an 88-amino-acid chain: Cell division topological specificity factor (88 aa).

Belongs to the MinE family.

In terms of biological role, prevents the cell division inhibition by proteins MinC and MinD at internal division sites while permitting inhibition at polar sites. This ensures cell division at the proper site by restricting the formation of a division septum at the midpoint of the long axis of the cell. The protein is Cell division topological specificity factor of Pseudoalteromonas translucida (strain TAC 125).